A 297-amino-acid chain; its full sequence is tRNA dimethylallyltransferase (297 aa).

ATP is bound at residue 10-17 (GITASGKS). Residue 12-17 (TASGKS) participates in substrate binding. The interval 36–39 (DSKQ) is interaction with substrate tRNA.

It belongs to the IPP transferase family. Monomer. Requires Mg(2+) as cofactor.

The enzyme catalyses adenosine(37) in tRNA + dimethylallyl diphosphate = N(6)-dimethylallyladenosine(37) in tRNA + diphosphate. Catalyzes the transfer of a dimethylallyl group onto the adenine at position 37 in tRNAs that read codons beginning with uridine, leading to the formation of N6-(dimethylallyl)adenosine (i(6)A). This Wolbachia pipientis wMel protein is tRNA dimethylallyltransferase.